We begin with the raw amino-acid sequence, 508 residues long: Photosystem II CP47 reaction center protein (508 aa).

The next 6 helical transmembrane spans lie at 21–36, 101–115, 140–156, 203–218, 237–252, and 457–472; these read SVHI…WAGS, IVFS…IWHW, GIHL…SGAF, IAAG…FHLS, VLSS…AFIV, and TFAL…HGAR.

This sequence belongs to the PsbB/PsbC family. PsbB subfamily. PSII is composed of 1 copy each of membrane proteins PsbA, PsbB, PsbC, PsbD, PsbE, PsbF, PsbH, PsbI, PsbJ, PsbK, PsbL, PsbM, PsbT, PsbX, PsbY, PsbZ, Psb30/Ycf12, at least 3 peripheral proteins of the oxygen-evolving complex and a large number of cofactors. It forms dimeric complexes. Binds multiple chlorophylls. PSII binds additional chlorophylls, carotenoids and specific lipids. serves as cofactor.

It localises to the plastid. The protein resides in the chloroplast thylakoid membrane. In terms of biological role, one of the components of the core complex of photosystem II (PSII). It binds chlorophyll and helps catalyze the primary light-induced photochemical processes of PSII. PSII is a light-driven water:plastoquinone oxidoreductase, using light energy to abstract electrons from H(2)O, generating O(2) and a proton gradient subsequently used for ATP formation. The chain is Photosystem II CP47 reaction center protein from Cycas taitungensis (Prince sago).